Reading from the N-terminus, the 476-residue chain is Protein transport protein Sec61 subunit alpha isoform 1 (476 aa).

At 1–33 (MGIKFLEVIKPFCVILPEIQKPERKIQFKEKVL) the chain is on the cytoplasmic side. The chain crosses the membrane as a helical span at residues 34-53 (WTAITLFIFLVCCQIPLFGI). The Lumenal segment spans residues 54–76 (MSSDSADPFYWMRVILASNRGTL). A helical transmembrane segment spans residues 77–96 (MELGISPIVTSGLIMQLLAG). Residues 97 to 117 (AKIIEVGDTPKDRALFNGAQK) are Cytoplasmic-facing. The chain crosses the membrane as a helical span at residues 118–138 (LFGMTITIGQSIVYVMTGMYG). At 139 to 144 (DPSEMG) the chain is on the lumenal side. The helical transmembrane segment at 145–165 (AGVCLLITIQLFVAGLIVLLL) threads the bilayer. The Cytoplasmic portion of the chain corresponds to 166-172 (DELLQKG). Residues 173 to 193 (YGLGSGISLFIATNICETIVW) traverse the membrane as a helical segment. The Lumenal portion of the chain corresponds to 194–240 (KAFSPTTVNTGRGMEFEGAIIALFHLLATRTDKVRALREAFYRQNLP). The chain crosses the membrane as a helical span at residues 241-261 (NLMNLIATIFVFAVVIYFQGF). Residues 262-288 (RVDLPIKSARYRGQYNTYPIKLFYTSN) lie on the Cytoplasmic side of the membrane. Residues 289 to 309 (IPIILQSALVSNLYVISQMLS) traverse the membrane as a helical segment. Residues 310–354 (ARFSGNLLVSLLGTWSDTSSGGPARAYPVGGLCYYLSPPESFGSV) are Lumenal-facing. A helical transmembrane segment spans residues 355–375 (LEDPVHAVVYIVFMLGSCAFF). Residues 376–420 (SKTWIEVSGSSAKDVAKQLKEQQMVMRGHRETSMVHELNRYIPTA) are Cytoplasmic-facing. A helical membrane pass occupies residues 421 to 441 (AAFGGLCIGALSVLADFLGAI). Topologically, residues 442–445 (GSGT) are lumenal. A helical membrane pass occupies residues 446–462 (GILLAVTIIYQYFEIFV). Over 463-476 (KEQSEVGSMGALLF) the chain is Cytoplasmic.

Belongs to the SecY/SEC61-alpha family. As to quaternary structure, the SEC61 channel-forming translocon complex consists of channel-forming core components SEC61A1, SEC61B and SEC61G and different auxiliary components such as SEC62 and SEC63. The SEC61 channel associates with the multi-pass translocon (MPT) complex.

It is found in the endoplasmic reticulum membrane. Its function is as follows. Component of SEC61 channel-forming translocon complex that mediates transport of signal peptide-containing precursor polypeptides across the endoplasmic reticulum (ER). Forms a ribosome receptor and a gated pore in the ER membrane, both functions required for cotranslational translocation of nascent polypeptides. May cooperate with auxiliary protein SEC62, SEC63 and HSPA5/BiP to enable post-translational transport of small presecretory proteins. The SEC61 channel is also involved in ER membrane insertion of transmembrane proteins: it mediates membrane insertion of the first few transmembrane segments of proteins, while insertion of subsequent transmembrane regions of multi-pass membrane proteins is mediated by the multi-pass translocon (MPT) complex. The SEC61 channel cooperates with the translocating protein TRAM1 to import nascent proteins into the ER. Controls the passive efflux of calcium ions from the ER lumen to the cytosol through SEC61 channel, contributing to the maintenance of cellular calcium homeostasis. Plays a critical role in nephrogenesis, specifically at pronephros stage. This Bos taurus (Bovine) protein is Protein transport protein Sec61 subunit alpha isoform 1 (SEC61A1).